A 198-amino-acid polypeptide reads, in one-letter code: Probable GTP-binding protein EngB (198 aa).

An EngB-type G domain is found at 21 to 195 (NFSEVAFLGR…EDIIINQTLG (175 aa)). Residues 29-36 (GRSNVGKS), 56-60 (GKTQL), 81-84 (DLPG), 151-154 (TKCD), and 174-176 (VSN) each bind GTP. Residues Ser-36 and Thr-58 each coordinate Mg(2+).

This sequence belongs to the TRAFAC class TrmE-Era-EngA-EngB-Septin-like GTPase superfamily. EngB GTPase family. It depends on Mg(2+) as a cofactor.

In terms of biological role, necessary for normal cell division and for the maintenance of normal septation. The chain is Probable GTP-binding protein EngB from Campylobacter jejuni (strain RM1221).